We begin with the raw amino-acid sequence, 421 residues long: Serine--tRNA ligase (421 aa).

Residue 230-232 participates in L-serine binding; it reads TAE. An ATP-binding site is contributed by 259 to 261; it reads RRE. Glutamate 282 is a binding site for L-serine. 346–349 contacts ATP; that stretch reads EISS. Serine 380 is a binding site for L-serine.

This sequence belongs to the class-II aminoacyl-tRNA synthetase family. Type-1 seryl-tRNA synthetase subfamily. In terms of assembly, homodimer. The tRNA molecule binds across the dimer.

Its subcellular location is the cytoplasm. It carries out the reaction tRNA(Ser) + L-serine + ATP = L-seryl-tRNA(Ser) + AMP + diphosphate + H(+). It catalyses the reaction tRNA(Sec) + L-serine + ATP = L-seryl-tRNA(Sec) + AMP + diphosphate + H(+). It functions in the pathway aminoacyl-tRNA biosynthesis; selenocysteinyl-tRNA(Sec) biosynthesis; L-seryl-tRNA(Sec) from L-serine and tRNA(Sec): step 1/1. In terms of biological role, catalyzes the attachment of serine to tRNA(Ser). Is also able to aminoacylate tRNA(Sec) with serine, to form the misacylated tRNA L-seryl-tRNA(Sec), which will be further converted into selenocysteinyl-tRNA(Sec). The polypeptide is Serine--tRNA ligase (Methanosarcina acetivorans (strain ATCC 35395 / DSM 2834 / JCM 12185 / C2A)).